The following is a 510-amino-acid chain: Serine/threonine-protein kinase RIO3 (510 aa).

2 disordered regions span residues Gly-100–Asp-126 and Asp-143–Gly-191. Composition is skewed to basic and acidic residues over residues Thr-108–Gln-118 and Thr-162–Asn-179. The 276-residue stretch at Leu-235–Asn-510 folds into the Protein kinase domain. ATP is bound by residues Ile-241 to Val-249 and Lys-275. Asp-388 (proton acceptor) is an active-site residue. A compositionally biased stretch (basic and acidic residues) spans Arg-474 to Ala-499. The disordered stretch occupies residues Arg-474–Asn-510.

It belongs to the protein kinase superfamily. RIO-type Ser/Thr kinase family. Mg(2+) is required as a cofactor. Expressed in tail neurons (PVQ and PHAL/PQR).

The enzyme catalyses L-seryl-[protein] + ATP = O-phospho-L-seryl-[protein] + ADP + H(+). The catalysed reaction is L-threonyl-[protein] + ATP = O-phospho-L-threonyl-[protein] + ADP + H(+). The chain is Serine/threonine-protein kinase RIO3 (riok-3) from Caenorhabditis elegans.